A 309-amino-acid chain; its full sequence is Tyrosine recombinase XerD (309 aa).

Residues 3–88 enclose the Core-binding (CB) domain; sequence MRASLAIENF…ALRQFFRFLY (86 aa). The Tyr recombinase domain maps to 109–302; that stretch reads PLPKIMSVEN…LEERLHKLVS (194 aa). Residues arginine 158, lysine 182, histidine 254, arginine 257, and histidine 280 contribute to the active site. The active-site O-(3'-phospho-DNA)-tyrosine intermediate is the tyrosine 289.

This sequence belongs to the 'phage' integrase family. XerD subfamily. As to quaternary structure, forms a cyclic heterotetrameric complex composed of two molecules of XerC and two molecules of XerD.

It localises to the cytoplasm. In terms of biological role, site-specific tyrosine recombinase, which acts by catalyzing the cutting and rejoining of the recombining DNA molecules. The XerC-XerD complex is essential to convert dimers of the bacterial chromosome into monomers to permit their segregation at cell division. It also contributes to the segregational stability of plasmids. The protein is Tyrosine recombinase XerD of Brucella suis biovar 1 (strain 1330).